The sequence spans 145 residues: D-aminoacyl-tRNA deacylase (145 aa).

A Gly-cisPro motif, important for rejection of L-amino acids motif is present at residues 137–138 (GP).

It belongs to the DTD family. Homodimer.

The protein localises to the cytoplasm. It carries out the reaction glycyl-tRNA(Ala) + H2O = tRNA(Ala) + glycine + H(+). The enzyme catalyses a D-aminoacyl-tRNA + H2O = a tRNA + a D-alpha-amino acid + H(+). An aminoacyl-tRNA editing enzyme that deacylates mischarged D-aminoacyl-tRNAs. Also deacylates mischarged glycyl-tRNA(Ala), protecting cells against glycine mischarging by AlaRS. Acts via tRNA-based rather than protein-based catalysis; rejects L-amino acids rather than detecting D-amino acids in the active site. By recycling D-aminoacyl-tRNA to D-amino acids and free tRNA molecules, this enzyme counteracts the toxicity associated with the formation of D-aminoacyl-tRNA entities in vivo and helps enforce protein L-homochirality. The chain is D-aminoacyl-tRNA deacylase from Alteromonas mediterranea (strain DSM 17117 / CIP 110805 / LMG 28347 / Deep ecotype).